Consider the following 336-residue polypeptide: Fructose-1,6-bisphosphatase class 1 (336 aa).

Mg(2+)-binding residues include glutamate 92, aspartate 115, leucine 117, and aspartate 118. Substrate contacts are provided by residues 118 to 121, asparagine 211, tyrosine 244, 262 to 264, and lysine 274; these read DGSS and YLY. Glutamate 280 is a binding site for Mg(2+).

Belongs to the FBPase class 1 family. As to quaternary structure, homotetramer. The cofactor is Mg(2+).

The protein localises to the cytoplasm. The enzyme catalyses beta-D-fructose 1,6-bisphosphate + H2O = beta-D-fructose 6-phosphate + phosphate. Its pathway is carbohydrate biosynthesis; gluconeogenesis. The sequence is that of Fructose-1,6-bisphosphatase class 1 from Aliivibrio fischeri (strain MJ11) (Vibrio fischeri).